The primary structure comprises 469 residues: MADEVPTAVPLATPAGSSSLSFTQGFLLGQLSIAILIFCFIKFFIFGEPPSADDRALHLNSLRRARTLAHQQSYKQLRTRANSTSLSLRHKPSTSIIRKGEETRGGPSIATILAKTYYNVKGHQPESLDWFNVLIAQTIAQLRADARQDDAILTSLTEVLNTGSKPDWIGEIKVTEIALGDEFPIFSNCRVMPAEDGFWYGPGSTGNDKERLQARMDVDLSDVITIGVETTLNLNWPKPMSAVLPVALAVSIVRFSGTLAMSFIPSSSPPSTTAPMPSPTSNTHRSSSPSRPASSSGAPPHRPTTLAFTFLDDYRLDLSVRSLVGSRSRLQDVPKIAQLIESRVHAWFDERAVEPRFQQIVLPSLWPRKHNTRGGAPEDTEAAAEGEEGLDEDDFAVVDGNGTAPGSTSYIPSPIAENVTLEERIEAEGAKMREAEIRAGVRKPSASQERSRGRDDRADGMRWRGALPR.

The Lumenal portion of the chain corresponds to 1–25; that stretch reads MADEVPTAVPLATPAGSSSLSFTQG. The helical transmembrane segment at 26–46 threads the bilayer; sequence FLLGQLSIAILIFCFIKFFIF. At 47–469 the chain is on the cytoplasmic side; the sequence is GEPPSADDRA…GMRWRGALPR (423 aa). Residues 124–363 form the SMP-LTD domain; sequence QPESLDWFNV…EPRFQQIVLP (240 aa). A compositionally biased stretch (low complexity) spans 266–299; it reads SSSPPSTTAPMPSPTSNTHRSSSPSRPASSSGAP. Disordered regions lie at residues 266-304 and 426-469; these read SSSP…HRPT and EAEG…ALPR. 2 stretches are compositionally biased toward basic and acidic residues: residues 426–439 and 449–462; these read EAEG…EIRA and ERSR…DGMR.

Belongs to the MMM1 family. In terms of assembly, homodimer. Component of the ER-mitochondria encounter structure (ERMES) or MDM complex, composed of mmm1, MDM10, MDM12 and MDM34. A mmm1 homodimer associates with one molecule of MDM12 on each side in a pairwise head-to-tail manner, and the SMP-LTD domains of mmm1 and MDM12 generate a continuous hydrophobic tunnel for phospholipid trafficking.

It is found in the endoplasmic reticulum membrane. Component of the ERMES/MDM complex, which serves as a molecular tether to connect the endoplasmic reticulum (ER) and mitochondria. Components of this complex are involved in the control of mitochondrial shape and protein biogenesis, and function in nonvesicular lipid trafficking between the ER and mitochondria. The MDM12-mmm1 subcomplex functions in the major beta-barrel assembly pathway that is responsible for biogenesis of all outer membrane beta-barrel proteins, and acts in a late step after the SAM complex. The MDM10-MDM12-mmm1 subcomplex further acts in the TOM40-specific pathway after the action of the MDM12-mmm1 complex. Essential for establishing and maintaining the structure of mitochondria and maintenance of mtDNA nucleoids. The sequence is that of Maintenance of mitochondrial morphology protein 1 from Pyrenophora tritici-repentis (strain Pt-1C-BFP) (Wheat tan spot fungus).